Reading from the N-terminus, the 161-residue chain is Phosphopantetheine adenylyltransferase (161 aa).

S8 provides a ligand contact to substrate. Residues 8 to 9 (SF) and H16 each bind ATP. Substrate-binding positions include 36 to 40 (ENPRK), L72, and R86. ATP contacts are provided by residues 87–89 (GLR), E97, and 122–128 (FSFISSS). E132 is a substrate binding site.

This sequence belongs to the bacterial CoaD family. In terms of assembly, homohexamer. Mg(2+) serves as cofactor.

The protein localises to the cytoplasm. The enzyme catalyses (R)-4'-phosphopantetheine + ATP + H(+) = 3'-dephospho-CoA + diphosphate. The protein operates within cofactor biosynthesis; coenzyme A biosynthesis; CoA from (R)-pantothenate: step 4/5. Functionally, reversibly transfers an adenylyl group from ATP to 4'-phosphopantetheine, yielding dephospho-CoA (dPCoA) and pyrophosphate. In Thermotoga maritima (strain ATCC 43589 / DSM 3109 / JCM 10099 / NBRC 100826 / MSB8), this protein is Phosphopantetheine adenylyltransferase.